Consider the following 192-residue polypeptide: dITP/XTP pyrophosphatase (192 aa).

7 to 12 serves as a coordination point for substrate; that stretch reads SNNKNK. Aspartate 68 (proton acceptor) is an active-site residue. Aspartate 68 contacts Mg(2+). Substrate is bound by residues threonine 69, 148–151, lysine 171, and 176–177; these read FGYD and HR.

It belongs to the HAM1 NTPase family. In terms of assembly, homodimer. Mg(2+) is required as a cofactor.

The catalysed reaction is XTP + H2O = XMP + diphosphate + H(+). The enzyme catalyses dITP + H2O = dIMP + diphosphate + H(+). It carries out the reaction ITP + H2O = IMP + diphosphate + H(+). Pyrophosphatase that catalyzes the hydrolysis of nucleoside triphosphates to their monophosphate derivatives, with a high preference for the non-canonical purine nucleotides XTP (xanthosine triphosphate), dITP (deoxyinosine triphosphate) and ITP. Seems to function as a house-cleaning enzyme that removes non-canonical purine nucleotides from the nucleotide pool, thus preventing their incorporation into DNA/RNA and avoiding chromosomal lesions. In Flavobacterium johnsoniae (strain ATCC 17061 / DSM 2064 / JCM 8514 / BCRC 14874 / CCUG 350202 / NBRC 14942 / NCIMB 11054 / UW101) (Cytophaga johnsonae), this protein is dITP/XTP pyrophosphatase.